We begin with the raw amino-acid sequence, 673 residues long: Bifunctional polymyxin resistance protein ArnA (673 aa).

Positions 1-311 (MKAIVFAYHD…EMGMVPQARL (311 aa)) are formyltransferase ArnAFT. The Proton donor; for formyltransferase activity role is filled by histidine 104. (6R)-10-formyltetrahydrofolate is bound by residues arginine 114 and 136 to 140 (VSRAD). The dehydrogenase ArnADH stretch occupies residues 321–673 (RRTRVLILGV…HTADATDTQG (353 aa)). Residues aspartate 354 and 375–376 (DI) contribute to the NAD(+) site. UDP-alpha-D-glucuronate-binding positions include alanine 400, tyrosine 405, and 439–440 (TS). Glutamate 441 serves as the catalytic Proton acceptor; for decarboxylase activity. Residues arginine 467, asparagine 499, 533 to 542 (KLVDGGAQKR), and tyrosine 620 contribute to the UDP-alpha-D-glucuronate site. The active-site Proton donor; for decarboxylase activity is the arginine 626.

The protein in the N-terminal section; belongs to the Fmt family. UDP-L-Ara4N formyltransferase subfamily. This sequence in the C-terminal section; belongs to the NAD(P)-dependent epimerase/dehydratase family. UDP-glucuronic acid decarboxylase subfamily. Homohexamer, formed by a dimer of trimers.

It carries out the reaction UDP-alpha-D-glucuronate + NAD(+) = UDP-beta-L-threo-pentopyranos-4-ulose + CO2 + NADH. The catalysed reaction is UDP-4-amino-4-deoxy-beta-L-arabinose + (6R)-10-formyltetrahydrofolate = UDP-4-deoxy-4-formamido-beta-L-arabinose + (6S)-5,6,7,8-tetrahydrofolate + H(+). The protein operates within nucleotide-sugar biosynthesis; UDP-4-deoxy-4-formamido-beta-L-arabinose biosynthesis; UDP-4-deoxy-4-formamido-beta-L-arabinose from UDP-alpha-D-glucuronate: step 1/3. It functions in the pathway nucleotide-sugar biosynthesis; UDP-4-deoxy-4-formamido-beta-L-arabinose biosynthesis; UDP-4-deoxy-4-formamido-beta-L-arabinose from UDP-alpha-D-glucuronate: step 3/3. Its pathway is bacterial outer membrane biogenesis; lipopolysaccharide biosynthesis. Bifunctional enzyme that catalyzes the oxidative decarboxylation of UDP-glucuronic acid (UDP-GlcUA) to UDP-4-keto-arabinose (UDP-Ara4O) and the addition of a formyl group to UDP-4-amino-4-deoxy-L-arabinose (UDP-L-Ara4N) to form UDP-L-4-formamido-arabinose (UDP-L-Ara4FN). The modified arabinose is attached to lipid A and is required for resistance to polymyxin and cationic antimicrobial peptides. In Pectobacterium atrosepticum (strain SCRI 1043 / ATCC BAA-672) (Erwinia carotovora subsp. atroseptica), this protein is Bifunctional polymyxin resistance protein ArnA.